A 320-amino-acid polypeptide reads, in one-letter code: Cell-cell adhesion glycoprotein 64 (320 aa).

The first 19 residues, 1–19, serve as a signal peptide directing secretion; the sequence is MNKFITLFVLLASVSVAMS. 9 disulfide bridges follow: cysteine 39–cysteine 57, cysteine 67–cysteine 79, cysteine 73–cysteine 86, cysteine 98–cysteine 110, cysteine 104–cysteine 115, cysteine 123–cysteine 138, cysteine 132–cysteine 147, cysteine 157–cysteine 171, and cysteine 165–cysteine 176. Residue asparagine 49 is glycosylated (N-linked (GlcNAc...) asparagine). An N-linked (GlcNAc...) asparagine glycan is attached at asparagine 80. Asparagine 141 and asparagine 158 each carry an N-linked (GlcNAc...) asparagine glycan. N-linked (GlcNAc...) asparagine glycosylation is present at asparagine 187. 2 disulfides stabilise this stretch: cysteine 188–cysteine 202 and cysteine 194–cysteine 207. Asparagine 216 carries an N-linked (GlcNAc...) asparagine glycan. Intrachain disulfides connect cysteine 226–cysteine 246, cysteine 232–cysteine 234, cysteine 266–cysteine 285, and cysteine 270–cysteine 281. Residue serine 298 is the site of GPI-like-anchor amidated serine attachment. Positions 299–320 are cleaved as a propeptide — removed in mature form; that stretch reads SATTIAFNAFVVFAIVLSVLLF.

Post-translationally, contains 18 disulfide bonds. In terms of processing, the GPI-like-anchor contains a phosphoceramide group, rather than a phosphatidyl group.

It localises to the cell membrane. Its function is as follows. Cell-cell adhesion during development. This chain is Cell-cell adhesion glycoprotein 64, found in Heterostelium pallidum (Cellular slime mold).